A 437-amino-acid chain; its full sequence is Phosphomethylpyrimidine synthase (437 aa).

Residues N69, M98, Y127, H163, 185–187 (SRG), 226–229 (DACR), and E265 each bind substrate. H269 serves as a coordination point for Zn(2+). Y292 is a substrate binding site. H333 contacts Zn(2+). [4Fe-4S] cluster-binding residues include C409, C412, and C416.

Belongs to the ThiC family. It depends on [4Fe-4S] cluster as a cofactor.

It catalyses the reaction 5-amino-1-(5-phospho-beta-D-ribosyl)imidazole + S-adenosyl-L-methionine = 4-amino-2-methyl-5-(phosphooxymethyl)pyrimidine + CO + 5'-deoxyadenosine + formate + L-methionine + 3 H(+). Its pathway is cofactor biosynthesis; thiamine diphosphate biosynthesis. Functionally, catalyzes the synthesis of the hydroxymethylpyrimidine phosphate (HMP-P) moiety of thiamine from aminoimidazole ribotide (AIR) in a radical S-adenosyl-L-methionine (SAM)-dependent reaction. This Clostridium botulinum (strain Okra / Type B1) protein is Phosphomethylpyrimidine synthase.